A 116-amino-acid polypeptide reads, in one-letter code: Non-specific lipid-transfer protein (116 aa).

A signal peptide spans 1–23 (MASMKVVCVALIMCIVIAPMAES). Disulfide bonds link cysteine 27-cysteine 74, cysteine 37-cysteine 51, cysteine 52-cysteine 97, and cysteine 72-cysteine 111.

The protein belongs to the plant LTP family.

In terms of biological role, plant non-specific lipid-transfer proteins transfer phospholipids as well as galactolipids across membranes. May play a role in wax or cutin deposition in the cell walls of expanding epidermal cells and certain secretory tissues. This Cicer arietinum (Chickpea) protein is Non-specific lipid-transfer protein.